The following is a 256-amino-acid chain: 5-keto-4-deoxy-D-glucarate aldolase (256 aa).

Histidine 50 functions as the Proton acceptor in the catalytic mechanism. Position 151 (glutamine 151) interacts with substrate. A Mg(2+)-binding site is contributed by glutamate 153. 2 residues coordinate substrate: serine 178 and aspartate 179. Mg(2+) is bound at residue aspartate 179.

It belongs to the HpcH/HpaI aldolase family. KDGluc aldolase subfamily. As to quaternary structure, homohexamer; trimer of dimers. Mg(2+) serves as cofactor.

It carries out the reaction 5-dehydro-4-deoxy-D-glucarate = 2-hydroxy-3-oxopropanoate + pyruvate. The enzyme catalyses 2-dehydro-3-deoxy-D-glucarate = 2-hydroxy-3-oxopropanoate + pyruvate. It participates in carbohydrate acid metabolism; galactarate degradation; D-glycerate from galactarate: step 2/3. Its function is as follows. Catalyzes the reversible retro-aldol cleavage of both 5-keto-4-deoxy-D-glucarate and 2-keto-3-deoxy-D-glucarate to pyruvate and tartronic semialdehyde. This Salmonella arizonae (strain ATCC BAA-731 / CDC346-86 / RSK2980) protein is 5-keto-4-deoxy-D-glucarate aldolase.